An 846-amino-acid polypeptide reads, in one-letter code: Aminopeptidase N (846 aa).

Substrate-binding positions include Glu-120 and 252 to 256 (GAMEN). His-288 lines the Zn(2+) pocket. Glu-289 serves as the catalytic Proton acceptor. Zn(2+)-binding residues include His-292 and Glu-311.

It belongs to the peptidase M1 family. Monomer. Zn(2+) serves as cofactor.

It localises to the cytoplasm. The catalysed reaction is Release of an N-terminal amino acid, Xaa-|-Yaa- from a peptide, amide or arylamide. Xaa is preferably Ala, but may be most amino acids including Pro (slow action). When a terminal hydrophobic residue is followed by a prolyl residue, the two may be released as an intact Xaa-Pro dipeptide.. Aminopeptidase with broad substrate specificity to several peptides. It has more affinity for oligopeptides than for dipeptides. It plays an essential role in the metabolism, it may be involved in nitrogen supply or protein turnover. In Lactococcus lactis subsp. cremoris (strain MG1363), this protein is Aminopeptidase N (pepN).